We begin with the raw amino-acid sequence, 380 residues long: Cytochrome b (380 aa).

4 helical membrane passes run 34–54 (FGSLLGICLMTQILTGLLLAM), 78–99 (WLIRNLHANGASFFFICIYLHI), 114–134 (WNTGILLLLTLMATAFVGYVL), and 179–199 (FFALHFLLPFMIAGLTLIHLT). Heme b contacts are provided by His84 and His98. Positions 183 and 197 each coordinate heme b. His202 provides a ligand contact to a ubiquinone. Transmembrane regions (helical) follow at residues 227–247 (LKDILGFTLMFLPLTALALFS), 289–309 (LGGVLALAASVLVLFLSPLLH), 321–341 (LSQLLFWLLVTNLFILTWIGS), and 348–368 (FIIIGQLASITYFTILLVLFP).

The protein belongs to the cytochrome b family. As to quaternary structure, the cytochrome bc1 complex contains 11 subunits: 3 respiratory subunits (MT-CYB, CYC1 and UQCRFS1), 2 core proteins (UQCRC1 and UQCRC2) and 6 low-molecular weight proteins (UQCRH/QCR6, UQCRB/QCR7, UQCRQ/QCR8, UQCR10/QCR9, UQCR11/QCR10 and a cleavage product of UQCRFS1). This cytochrome bc1 complex then forms a dimer. Heme b serves as cofactor.

The protein localises to the mitochondrion inner membrane. Its function is as follows. Component of the ubiquinol-cytochrome c reductase complex (complex III or cytochrome b-c1 complex) that is part of the mitochondrial respiratory chain. The b-c1 complex mediates electron transfer from ubiquinol to cytochrome c. Contributes to the generation of a proton gradient across the mitochondrial membrane that is then used for ATP synthesis. The protein is Cytochrome b (MT-CYB) of Thalassarche impavida (Albatross).